Here is a 178-residue protein sequence, read N- to C-terminus: Stathmin-2-B (178 aa).

The region spanning 38–178 is the SLD domain; the sequence is DDMEVKQLNK…KNKEQLELSG (141 aa). The stretch at 75-178 forms a coiled coil; the sequence is KRKDVSLEEI…KNKEQLELSG (104 aa).

This sequence belongs to the stathmin family. As to expression, nervous tissue.

The protein localises to the cytoplasm. Its subcellular location is the membrane. The protein resides in the cell projection. It is found in the lamellipodium. This Xenopus laevis (African clawed frog) protein is Stathmin-2-B (stmn2-b).